The primary structure comprises 767 residues: Lysyl oxidase homolog 2 (767 aa).

A signal peptide spans 1–19 (MLVTHIFLLTLSLSVPTLG). SRCR domains follow at residues 51–152 (VRLA…VQCS), 181–295 (IRAI…VSCT), 319–418 (VRLR…VRCN), and 428–537 (VRLS…VSCV). Intrachain disulfides connect Cys-77-Cys-141, Cys-90-Cys-151, Cys-121-Cys-131, Cys-211-Cys-284, Cys-224-Cys-294, Cys-258-Cys-268, Cys-344-Cys-407, Cys-357-Cys-417, and Cys-388-Cys-398. Residue Asn-281 is glycosylated (N-linked (GlcNAc...) asparagine). Asn-448 carries an N-linked (GlcNAc...) asparagine glycan. 3 cysteine pairs are disulfide-bonded: Cys-457/Cys-523, Cys-470/Cys-536, and Cys-504/Cys-514. The interval 541 to 744 (PDLVLNAALV…WMYNCHIGGS (204 aa)) is lysyl-oxidase like. Ca(2+)-binding residues include Asp-542 and Leu-543. 4 disulfides stabilise this stretch: Cys-566–Cys-618, Cys-572–Cys-688, Cys-650–Cys-666, and Cys-656–Cys-678. 3 residues coordinate Cu cation: His-619, His-621, and His-623. Asn-637 carries an N-linked (GlcNAc...) asparagine glycan. The lysine tyrosylquinone (Lys-Tyr) cross-link spans 646–682 (KASFCLEDSECETDVQKQYACANFGEQGITVGCWDVY). Tyr-682 is modified (2',4',5'-topaquinone). Glu-715, Asp-717, Asn-720, and Asn-721 together coordinate Ca(2+). A disulfide bond links Cys-725 and Cys-739.

It belongs to the lysyl oxidase family. The cofactor is Cu cation. Lysine tyrosylquinone residue serves as cofactor. Post-translationally, the lysine tyrosylquinone cross-link (LTQ) is generated by condensation of the epsilon-amino group of a lysine with a topaquinone produced by oxidation of tyrosine.

The protein resides in the secreted. It localises to the extracellular space. It is found in the extracellular matrix. The protein localises to the basement membrane. Its subcellular location is the nucleus. The protein resides in the chromosome. It localises to the endoplasmic reticulum. It catalyses the reaction L-lysyl-[protein] + O2 + H2O = (S)-2-amino-6-oxohexanoyl-[protein] + H2O2 + NH4(+). In terms of biological role, mediates the post-translational oxidative deamination of lysine residues on target proteins leading to the formation of deaminated lysine (allysine). Acts as a transcription corepressor and specifically mediates deamination of trimethylated 'Lys-4' of histone H3 (H3K4me3), a specific tag for epigenetic transcriptional activation. Shows no activity against histone H3 when it is trimethylated on 'Lys-9' (H3K9me3) or 'Lys-27' (H3K27me3) or when 'Lys-4' is monomethylated (H3K4me1) or dimethylated (H3K4me2). Also mediates deamination of methylated TAF10, a member of the transcription factor IID (TFIID) complex, which induces release of TAF10 from promoters, leading to inhibition of TFIID-dependent transcription. LOXL2-mediated deamination of TAF10 results in transcriptional repression of genes required for embryonic stem cell pluripotency. Involved in epithelial to mesenchymal transition (EMT) and participates in repression of E-cadherin, probably by mediating deamination of histone H3. When secreted into the extracellular matrix, promotes cross-linking of extracellular matrix proteins by mediating oxidative deamination of peptidyl lysine residues in precursors to fibrous collagen and elastin. Acts as a regulator of sprouting angiogenesis, probably via collagen IV scaffolding. Acts as a regulator of chondrocyte differentiation, probably by regulating expression of factors that control chondrocyte differentiation. This chain is Lysyl oxidase homolog 2 (loxl2), found in Xenopus tropicalis (Western clawed frog).